The primary structure comprises 714 residues: Polyribonucleotide nucleotidyltransferase (714 aa).

Residues aspartate 487 and aspartate 493 each contribute to the Mg(2+) site. One can recognise a KH domain in the interval 554-613; sequence PRIEVMTIPVDKIREVIGSGGKVIREIVEKTGAKINIEDDGTIKIASASGKEIEAARKWI. The S1 motif domain maps to 623–691; it reads GVVYEGTVVK…ERGKVRLSMK (69 aa).

Belongs to the polyribonucleotide nucleotidyltransferase family. It depends on Mg(2+) as a cofactor.

The protein resides in the cytoplasm. It carries out the reaction RNA(n+1) + phosphate = RNA(n) + a ribonucleoside 5'-diphosphate. Involved in mRNA degradation. Catalyzes the phosphorolysis of single-stranded polyribonucleotides processively in the 3'- to 5'-direction. This is Polyribonucleotide nucleotidyltransferase from Allorhizobium ampelinum (strain ATCC BAA-846 / DSM 112012 / S4) (Agrobacterium vitis (strain S4)).